A 455-amino-acid chain; its full sequence is tRNA modification GTPase MnmE (455 aa).

Positions 24, 81, and 121 each coordinate (6S)-5-formyl-5,6,7,8-tetrahydrofolate. One can recognise a TrmE-type G domain in the interval 217–378 (GMKVVIAGRP…LREHLKDCMG (162 aa)). Residue Asn-227 coordinates K(+). GTP-binding positions include 227–232 (NAGKSS), 246–252 (TDIAGTT), 271–274 (DTAG), and 359–361 (SAR). Residue Ser-231 coordinates Mg(2+). K(+)-binding residues include Thr-246, Ile-248, and Thr-251. Residue Thr-252 coordinates Mg(2+). (6S)-5-formyl-5,6,7,8-tetrahydrofolate is bound at residue Lys-455.

The protein belongs to the TRAFAC class TrmE-Era-EngA-EngB-Septin-like GTPase superfamily. TrmE GTPase family. Homodimer. Heterotetramer of two MnmE and two MnmG subunits. K(+) serves as cofactor.

It is found in the cytoplasm. In terms of biological role, exhibits a very high intrinsic GTPase hydrolysis rate. Involved in the addition of a carboxymethylaminomethyl (cmnm) group at the wobble position (U34) of certain tRNAs, forming tRNA-cmnm(5)s(2)U34. This chain is tRNA modification GTPase MnmE, found in Photobacterium profundum (strain SS9).